A 306-amino-acid chain; its full sequence is RNA-binding protein Raly (306 aa).

At serine 2 the chain carries N-acetylserine. A Glycyl lysine isopeptide (Lys-Gly) (interchain with G-Cter in SUMO2) cross-link involves residue lysine 4. Positions serine 21–glutamate 92 constitute an RRM domain. At lysine 44 the chain carries N6-acetyllysine. The residue at position 63 (serine 63) is a Phosphoserine. Glycyl lysine isopeptide (Lys-Gly) (interchain with G-Cter in SUMO2) cross-links involve residues lysine 94 and lysine 99. Phosphoserine occurs at positions 106 and 135. Lysine 159 is covalently cross-linked (Glycyl lysine isopeptide (Lys-Gly) (interchain with G-Cter in SUMO2)). Lysine 165 carries the N6-acetyllysine; alternate modification. Lysine 165 is covalently cross-linked (Glycyl lysine isopeptide (Lys-Gly) (interchain with G-Cter in SUMO2); alternate). Glycyl lysine isopeptide (Lys-Gly) (interchain with G-Cter in SUMO2) cross-links involve residues lysine 179 and lysine 191. Residues lysine 183–lysine 216 adopt a coiled-coil conformation. The tract at residues glutamine 215 to glutamine 306 is disordered. Over residues alanine 217–aspartate 226 the composition is skewed to basic and acidic residues. The segment covering glycine 227 to serine 252 has biased composition (gly residues). The epitope (recognized by BKRF1 antibodies) stretch occupies residues glycine 227–serine 253. Phosphothreonine is present on threonine 262. A Phosphoserine modification is found at serine 264. Phosphothreonine is present on threonine 286. The span at histidine 287–aspartate 297 shows a compositional bias: basic and acidic residues. A phosphoserine mark is found at serine 288 and serine 295. Threonine 298 carries the phosphothreonine modification.

Belongs to the RRM HNRPC family. RALY subfamily. In terms of assembly, identified in the spliceosome C complex. Interacts (through its RNA-binding domain) with FUS (through its RNA-binding domain); both are components of the same RNPs. In terms of tissue distribution, expressed in heart, brain, lung, liver, skeletal muscle, kidney and pancreas. Weakly expressed in placenta.

Its subcellular location is the nucleus. Functionally, RNA-binding protein that acts as a transcriptional cofactor for cholesterol biosynthetic genes in the liver. Binds the lipid-responsive non-coding RNA LeXis and is required for LeXis-mediated effect on cholesterogenesis. May be a heterogeneous nuclear ribonucleoprotein (hnRNP). This is RNA-binding protein Raly (RALY) from Homo sapiens (Human).